A 665-amino-acid polypeptide reads, in one-letter code: DNA mismatch repair protein MutL (665 aa).

2 stretches are compositionally biased toward polar residues: residues 348–361 (LEAT…NGLS) and 407–421 (PSSQ…NSRY). Disordered regions lie at residues 348–370 (LEAT…AEEG) and 385–445 (VHRG…STSA). Residues 426–445 (YSTNAASTNTASNYSHSTSA) are compositionally biased toward low complexity.

Belongs to the DNA mismatch repair MutL/HexB family.

This protein is involved in the repair of mismatches in DNA. It is required for dam-dependent methyl-directed DNA mismatch repair. May act as a 'molecular matchmaker', a protein that promotes the formation of a stable complex between two or more DNA-binding proteins in an ATP-dependent manner without itself being part of a final effector complex. The protein is DNA mismatch repair protein MutL of Shewanella denitrificans (strain OS217 / ATCC BAA-1090 / DSM 15013).